A 424-amino-acid chain; its full sequence is Zinc metalloprotease RasP (424 aa).

Helical transmembrane passes span V5–F25, F174–I194, L317–Y337, F351–P371, and E396–W416. H18 is a Zn(2+) binding site. The active site involves E19. H22 is a binding site for Zn(2+). Residues A184–E269 form the PDZ domain.

Belongs to the peptidase M50B family. Requires Zn(2+) as cofactor.

It localises to the cell membrane. Is responsible for Site-2 cleavage of the RsiW anti-sigma factor. This results, after a third proteolytic step catalyzed by the ClpXP protease, in the release of SigW and the transcription activation of the genes under the control of the sigma-W factor. The polypeptide is Zinc metalloprotease RasP (rasP) (Oceanobacillus iheyensis (strain DSM 14371 / CIP 107618 / JCM 11309 / KCTC 3954 / HTE831)).